Consider the following 554-residue polypeptide: Potassium-transporting ATPase potassium-binding subunit (554 aa).

12 helical membrane-spanning segments follow: residues Met-1–Ala-21, Trp-59–Leu-79, Gly-131–Val-151, Val-174–Ile-194, Pro-246–Thr-266, Gly-279–Trp-299, Phe-323–Val-343, Gly-352–Val-372, Gly-375–Gly-395, Phe-412–Met-432, Ile-481–Gly-501, and Gly-525–Leu-545.

Belongs to the KdpA family. As to quaternary structure, the system is composed of three essential subunits: KdpA, KdpB and KdpC.

It localises to the cell membrane. Functionally, part of the high-affinity ATP-driven potassium transport (or Kdp) system, which catalyzes the hydrolysis of ATP coupled with the electrogenic transport of potassium into the cytoplasm. This subunit binds the extracellular potassium ions and delivers the ions to the membrane domain of KdpB through an intramembrane tunnel. This Streptomyces griseus subsp. griseus (strain JCM 4626 / CBS 651.72 / NBRC 13350 / KCC S-0626 / ISP 5235) protein is Potassium-transporting ATPase potassium-binding subunit.